The following is a 142-amino-acid chain: Small ribosomal subunit protein bS18c (142 aa).

Residues 1-21 (MDRITGPFRKSKKSFRKPLPP) form a disordered region.

The protein belongs to the bacterial ribosomal protein bS18 family. In terms of assembly, part of the 30S ribosomal subunit.

Its subcellular location is the plastid. The protein is Small ribosomal subunit protein bS18c of Cuscuta gronovii (Common dodder).